A 264-amino-acid chain; its full sequence is S-adenosylmethionine decarboxylase proenzyme (264 aa).

The active-site Schiff-base intermediate with substrate; via pyruvic acid is Ser112. The residue at position 112 (Ser112) is a Pyruvic acid (Ser); by autocatalysis. Residue His117 is the Proton acceptor; for processing activity of the active site. Cys140 functions as the Proton donor; for catalytic activity in the catalytic mechanism.

It belongs to the prokaryotic AdoMetDC family. Type 2 subfamily. Heterooctamer of four alpha and four beta chains arranged as a tetramer of alpha/beta heterodimers. Pyruvate is required as a cofactor. Is synthesized initially as an inactive proenzyme. Formation of the active enzyme involves a self-maturation process in which the active site pyruvoyl group is generated from an internal serine residue via an autocatalytic post-translational modification. Two non-identical subunits are generated from the proenzyme in this reaction, and the pyruvate is formed at the N-terminus of the alpha chain, which is derived from the carboxyl end of the proenzyme. The post-translation cleavage follows an unusual pathway, termed non-hydrolytic serinolysis, in which the side chain hydroxyl group of the serine supplies its oxygen atom to form the C-terminus of the beta chain, while the remainder of the serine residue undergoes an oxidative deamination to produce ammonia and the pyruvoyl group blocking the N-terminus of the alpha chain.

It catalyses the reaction S-adenosyl-L-methionine + H(+) = S-adenosyl 3-(methylsulfanyl)propylamine + CO2. It participates in amine and polyamine biosynthesis; S-adenosylmethioninamine biosynthesis; S-adenosylmethioninamine from S-adenosyl-L-methionine: step 1/1. Functionally, catalyzes the decarboxylation of S-adenosylmethionine to S-adenosylmethioninamine (dcAdoMet), the propylamine donor required for the synthesis of the polyamines spermine and spermidine from the diamine putrescine. The protein is S-adenosylmethionine decarboxylase proenzyme of Escherichia coli O45:K1 (strain S88 / ExPEC).